The primary structure comprises 84 residues: Acid stress protein IbaG (84 aa).

Belongs to the BolA/IbaG family.

Its function is as follows. Involved in cell resistance against acid stress. The sequence is that of Acid stress protein IbaG from Escherichia coli O6:H1 (strain CFT073 / ATCC 700928 / UPEC).